The primary structure comprises 326 residues: Methyltransferase phqN (326 aa).

It belongs to the class I-like SAM-binding methyltransferase superfamily. Erg6/SMT family.

The protein operates within alkaloid biosynthesis. Methyltransferase; part of the gene cluster that mediates the biosynthesis of paraherquamide, a fungal indole alkaloid that belongs to a family of natural products containing a characteristic bicyclo[2.2.2]diazaoctane core. The first steps in the biosynthesis of paraherquamide is the production of the beta-methyl-proline precursor from L-isoleucine. They require oxidation of a terminally hydroxylated L-isoleucine to the corresponding aldehyde by enzymes which have still to be identified. Spontaneous cyclization and dehydration would yield the 4-methyl pyrolline-5-carboxylic acid, which is then reduced by the pyrroline-5-carboxylate reductase phqD leading to the beta-methyl-proline precursor. The next step of paraherquamide biosynthesis involves coupling of beta-methyl-proline and L-tryptophan by the bimodular NRPS phqB, to produce a monooxopiperazine intermediate. The reductase (R) domain of phqB utilizes NADPH for hydride transfer to reduce the thioester bond of the T domain-tethered linear dipeptide to a hemithioaminal intermediate, which spontaneously cleaves the C-S bond to release the aldehyde product. This compound undergoes spontaneous cyclization and dehydration to give a dienamine which is reverse prenylated at C-2 by the reverse prenyltransferase phqJ. The other prenyltransferase present in the cluster, phqI may be a redundant gene in the pathway. During biosynthetic assembly, the key step to produce the polycyclic core is catalyzed by the bifunctional reductase and intramolecular [4+2] Diels-Alderase, phqE, resulting in formation of the [2.2.2] diazaoctane intermediate preparaherquamide. Following formation of preparaherquamide, an indole 2,3-epoxidation-initiated pinacol-like rearrangement is catalyzed by the phqK FAD-dependent monooxygenase. The prenyltransferase phqA, the cytochrome P450 monooxygenase phqL, and the FAD-linked oxidoreductase phqH (or the cytochrome P450 monooxygenase phqM), are proposed to be involved in the formation of the pyran ring. The FAD-dependent monooxygenase phqK is likely responsible for generation of the spiro-oxindole, and the N-methylation is likely mediated by the phqN methyltransferase leading to the isolable natural product paraherquamide F. However, the order of these biosynthetic steps has still to be determined. In late-stage paraherquamide biosynthesis, the third P450 monooxygenase, phqO, is probably responsible for the C-14 hydroxylation, transforming paraherquamide F to paraherquamide G, and paraherquamide E to the final product paraherquamide A. The expansion from the 6-membered ring pyran (in paraherquamides F and G) to the 7-membered dioxepin ring (in paraherquamides A and E) represents a poorly understood but intriguing process that probably involves the 2-oxoglutarate-dependent dioxygenase phqC. Finally, the remaining members of the paraherquamide cluster, including phqI as well as phqM (or phqH), do not have a clearly prescribed role and appear to be redundant. This chain is Methyltransferase phqN, found in Penicillium fellutanum.